The primary structure comprises 347 residues: Quinolinate synthase (347 aa).

Iminosuccinate-binding residues include H47 and S68. C113 lines the [4Fe-4S] cluster pocket. Iminosuccinate-binding positions include Y139–N141 and S156. [4Fe-4S] cluster is bound at residue C200. Iminosuccinate-binding positions include H226–E228 and T243. C297 is a [4Fe-4S] cluster binding site.

This sequence belongs to the quinolinate synthase family. Type 1 subfamily. [4Fe-4S] cluster is required as a cofactor.

It is found in the cytoplasm. The enzyme catalyses iminosuccinate + dihydroxyacetone phosphate = quinolinate + phosphate + 2 H2O + H(+). The protein operates within cofactor biosynthesis; NAD(+) biosynthesis; quinolinate from iminoaspartate: step 1/1. Functionally, catalyzes the condensation of iminoaspartate with dihydroxyacetone phosphate to form quinolinate. This Escherichia coli O127:H6 (strain E2348/69 / EPEC) protein is Quinolinate synthase.